Reading from the N-terminus, the 398-residue chain is Bifunctional enzyme IspD/IspF (398 aa).

The segment at 1 to 234 (MPNPPRTAAI…SRLTALLGDI (234 aa)) is 2-C-methyl-D-erythritol 4-phosphate cytidylyltransferase. Positions 235–398 (RTGTGYDVHA…LPWGAEGLAG (164 aa)) are 2-C-methyl-D-erythritol 2,4-cyclodiphosphate synthase. Asp241 and His243 together coordinate a divalent metal cation. 4-CDP-2-C-methyl-D-erythritol 2-phosphate-binding positions include 241–243 (DVH) and 267–268 (HS). Residue His275 participates in a divalent metal cation binding. 4-CDP-2-C-methyl-D-erythritol 2-phosphate-binding positions include 289–291 (DIG), 365–368 (TTSE), Phe372, and Arg375.

In the N-terminal section; belongs to the IspD/TarI cytidylyltransferase family. IspD subfamily. The protein in the C-terminal section; belongs to the IspF family. A divalent metal cation serves as cofactor.

It catalyses the reaction 2-C-methyl-D-erythritol 4-phosphate + CTP + H(+) = 4-CDP-2-C-methyl-D-erythritol + diphosphate. The enzyme catalyses 4-CDP-2-C-methyl-D-erythritol 2-phosphate = 2-C-methyl-D-erythritol 2,4-cyclic diphosphate + CMP. It functions in the pathway isoprenoid biosynthesis; isopentenyl diphosphate biosynthesis via DXP pathway; isopentenyl diphosphate from 1-deoxy-D-xylulose 5-phosphate: step 2/6. Its pathway is isoprenoid biosynthesis; isopentenyl diphosphate biosynthesis via DXP pathway; isopentenyl diphosphate from 1-deoxy-D-xylulose 5-phosphate: step 4/6. Bifunctional enzyme that catalyzes the formation of 4-diphosphocytidyl-2-C-methyl-D-erythritol from CTP and 2-C-methyl-D-erythritol 4-phosphate (MEP) (IspD), and catalyzes the conversion of 4-diphosphocytidyl-2-C-methyl-D-erythritol 2-phosphate (CDP-ME2P) to 2-C-methyl-D-erythritol 2,4-cyclodiphosphate (ME-CPP) with a corresponding release of cytidine 5-monophosphate (CMP) (IspF). In Rhodopseudomonas palustris (strain BisB5), this protein is Bifunctional enzyme IspD/IspF.